A 234-amino-acid chain; its full sequence is MLTYETWEENDVSFSEEDETKGALSVLSWAYKEYKSEIVYACSFGVEGMVLLHLINQVNPSAKVVFLDTNVHFQETYELIQKVRERFPSLNIIEKQPKLTLDEQDKLHGDKLWESNPNLCCKIRKILPLEESLANEKAWISGLRREQSETRKHTKFINQDHRFQSIKVCPLIHWTWKEVWRYVYKHSLPYNPLHDVGYPSIGCEKCTLPVGEGGDSRDGRWAGKVKTECGLHYQ.

4 residues coordinate [4Fe-4S] cluster: C120, C121, C203, and C206. C229 acts as the Nucleophile; cysteine thiosulfonate intermediate in catalysis.

The protein belongs to the PAPS reductase family. CysH subfamily. [4Fe-4S] cluster is required as a cofactor.

Its subcellular location is the cytoplasm. It catalyses the reaction [thioredoxin]-disulfide + sulfite + AMP + 2 H(+) = adenosine 5'-phosphosulfate + [thioredoxin]-dithiol. The protein operates within sulfur metabolism; hydrogen sulfide biosynthesis; sulfite from sulfate. Its function is as follows. Catalyzes the formation of sulfite from adenosine 5'-phosphosulfate (APS) using thioredoxin as an electron donor. This chain is Adenosine 5'-phosphosulfate reductase, found in Bacillus thuringiensis (strain Al Hakam).